Reading from the N-terminus, the 1257-residue chain is uncharacterized protein (1257 aa).

The tract at residues 1–26 is disordered; sequence MNFSNKPNKSRKKSNRKNKKSNKSNT. Residues 8–22 are compositionally biased toward basic residues; it reads NKSRKKSNRKNKKSN.

The protein localises to the virion. This is an uncharacterized protein from Acanthamoeba polyphaga mimivirus (APMV).